The primary structure comprises 277 residues: Cis-3,4-dihydrophenanthrene-3,4-diol dehydrogenase (277 aa).

Residues phenylalanine 10–aspartate 37 and aspartate 60 contribute to the NAD(+) site. Serine 143 contributes to the substrate binding site. Residue tyrosine 156 is the Proton acceptor of the active site. Residue lysine 160 coordinates NAD(+).

It belongs to the short-chain dehydrogenases/reductases (SDR) family. In terms of assembly, homotetramer.

It carries out the reaction (3S,4R)-3,4-dihydrophenanthrene-3,4-diol + NAD(+) = phenanthrene-3,4-diol + NADH + H(+). With respect to regulation, inhibited by heavy metal such as Hg(2+) and by p-chloromercuribenzoate. Its function is as follows. Involved in the degradation of phenanthrene. Catalyzes the oxidation of cis-phenanthrene dihydrodiol (PDD) to yield phenanthrenediol. It can use either NAD or NADP as electron acceptor, however NAD is preferred to NADP. This Alcaligenes faecalis protein is Cis-3,4-dihydrophenanthrene-3,4-diol dehydrogenase (phnB).